The following is an 816-amino-acid chain: Leucine--tRNA ligase (816 aa).

The 'HIGH' region signature appears at 42 to 52 (PYPSGSLHMGH). A 'KMSKS' region motif is present at residues 574 to 578 (KMSKS). Residue lysine 577 participates in ATP binding.

It belongs to the class-I aminoacyl-tRNA synthetase family.

It is found in the cytoplasm. It carries out the reaction tRNA(Leu) + L-leucine + ATP = L-leucyl-tRNA(Leu) + AMP + diphosphate. This chain is Leucine--tRNA ligase, found in Ruthia magnifica subsp. Calyptogena magnifica.